Consider the following 469-residue polypeptide: Ribulose bisphosphate carboxylase large chain (469 aa).

Position 8 is an N6,N6,N6-trimethyllysine (K8). N117 and T167 together coordinate substrate. K169 functions as the Proton acceptor in the catalytic mechanism. Residue K171 participates in substrate binding. The Mg(2+) site is built by K195, D197, and E198. At K195 the chain carries N6-carboxylysine. The Proton acceptor role is filled by H288. Residues R289, H321, and S373 each coordinate substrate.

It belongs to the RuBisCO large chain family. Type I subfamily. Heterohexadecamer of 8 large chains and 8 small chains; disulfide-linked. The disulfide link is formed within the large subunit homodimers. Mg(2+) is required as a cofactor. The disulfide bond which can form in the large chain dimeric partners within the hexadecamer appears to be associated with oxidative stress and protein turnover.

It is found in the plastid. The protein localises to the chloroplast. It carries out the reaction 2 (2R)-3-phosphoglycerate + 2 H(+) = D-ribulose 1,5-bisphosphate + CO2 + H2O. The catalysed reaction is D-ribulose 1,5-bisphosphate + O2 = 2-phosphoglycolate + (2R)-3-phosphoglycerate + 2 H(+). Functionally, ruBisCO catalyzes two reactions: the carboxylation of D-ribulose 1,5-bisphosphate, the primary event in carbon dioxide fixation, as well as the oxidative fragmentation of the pentose substrate in the photorespiration process. Both reactions occur simultaneously and in competition at the same active site. The sequence is that of Ribulose bisphosphate carboxylase large chain from Akania bidwillii (Turnipwood).